Here is a 157-residue protein sequence, read N- to C-terminus: Serine-protein kinase RsbW (157 aa).

The protein belongs to the anti-sigma-factor family.

The catalysed reaction is L-seryl-[protein] + ATP = O-phospho-L-seryl-[protein] + ADP + H(+). It catalyses the reaction L-threonyl-[protein] + ATP = O-phospho-L-threonyl-[protein] + ADP + H(+). In terms of biological role, negative regulator of sigma-B activity. Phosphorylates and inactivates its specific antagonist protein, RsbV. Upon phosphorylation of RsbV, RsbW is released and binds to sigma-B, thereby blocking its ability to form an RNA polymerase holoenzyme (E-sigma-B). In Listeria innocua serovar 6a (strain ATCC BAA-680 / CLIP 11262), this protein is Serine-protein kinase RsbW.